Here is a 1018-residue protein sequence, read N- to C-terminus: Unconventional myosin-Ig (1018 aa).

Met1 is modified (N-acetylmethionine). The Myosin motor domain occupies 9–707; the sequence is YGKPDFVLLD…TLVTLEQSRA (699 aa). 102–109 lines the ATP pocket; the sequence is GESGAGKT. The actin-binding stretch occupies residues 584–606; that stretch reads MVALVENLASKEPFYVRCIKPNE. Positions 710 to 739 constitute an IQ domain; the sequence is IPIIVLLLQKAWRGTLARWRCRRLRAIYTI. One can recognise a TH1 domain in the interval 824 to 1017; that stretch reads GLRQDWGCRR…RGSFTLLWPS (194 aa).

Belongs to the TRAFAC class myosin-kinesin ATPase superfamily. Myosin family. Interacts with calmodulin; via its IQ motifs. As to expression, specifically expressed in hematopoietic cells.

It is found in the cell membrane. The protein resides in the cell projection. Its subcellular location is the phagocytic cup. In terms of biological role, unconventional myosin required during immune response for detection of rare antigen-presenting cells by regulating T-cell migration. Unconventional myosins are actin-based motor molecules with ATPase activity and serve in intracellular movements. Acts as a regulator of T-cell migration by generating membrane tension, enforcing cell-intrinsic meandering search, thereby enhancing detection of rare antigens during lymph-node surveillance, enabling pathogen eradication. Also required in B-cells, where it regulates different membrane/cytoskeleton-dependent processes. Involved in Fc-gamma receptor (Fc-gamma-R) phagocytosis. Its function is as follows. Constitutes the minor histocompatibility antigen HA-2. More generally, minor histocompatibility antigens (mHags) refer to immunogenic peptide which, when complexed with MHC, can generate an immune response after recognition by specific T-cells. The peptides are derived from polymorphic intracellular proteins, which are cleaved by normal pathways of antigen processing. The binding of these peptides to MHC class I or class II molecules and their expression on the cell surface can stimulate T-cell responses and thereby trigger graft rejection or graft-versus-host disease (GVHD) after hematopoietic stem cell transplantation from HLA-identical sibling donor. GVHD is a frequent complication after bone marrow transplantation (BMT), due to mismatch of minor histocompatibility antigen in HLA-matched sibling marrow transplants. HA-2 is restricted to MHC class I HLA-A*0201. This is Unconventional myosin-Ig (MYO1G) from Homo sapiens (Human).